Reading from the N-terminus, the 241-residue chain is Penton protein H240R (241 aa).

It belongs to the asfivirus H240R family.

Its subcellular location is the virion. Its function is as follows. Forms the penton at the fivefold vertices of the icosahedral capsid. Together with the minor capsid proteins (p17, p49, and M1249L), forms a complicated network immediately below the outer capsid shell, stabilizing the whole capsid. The chain is Penton protein H240R from African swine fever virus (isolate Tick/Malawi/Lil 20-1/1983) (ASFV).